A 640-amino-acid polypeptide reads, in one-letter code: Threonine--tRNA ligase (640 aa).

Residues 1–60 form the TGS domain; that stretch reads MKITFPDGAVKEFEPGVSTADIAASISPGLKKKALAGKLNGELLDLVTPIHEDGAIEIVT. Positions 241–538 are catalytic; sequence DHRKLGKELE…LIEEYKGAFP (298 aa). Positions 334, 385, and 515 each coordinate Zn(2+).

It belongs to the class-II aminoacyl-tRNA synthetase family. Homodimer. The cofactor is Zn(2+).

Its subcellular location is the cytoplasm. The catalysed reaction is tRNA(Thr) + L-threonine + ATP = L-threonyl-tRNA(Thr) + AMP + diphosphate + H(+). Functionally, catalyzes the attachment of threonine to tRNA(Thr) in a two-step reaction: L-threonine is first activated by ATP to form Thr-AMP and then transferred to the acceptor end of tRNA(Thr). Also edits incorrectly charged L-seryl-tRNA(Thr). This chain is Threonine--tRNA ligase, found in Listeria welshimeri serovar 6b (strain ATCC 35897 / DSM 20650 / CCUG 15529 / CIP 8149 / NCTC 11857 / SLCC 5334 / V8).